Reading from the N-terminus, the 228-residue chain is Probable septum site-determining protein MinC (228 aa).

It belongs to the MinC family. As to quaternary structure, interacts with MinD and FtsZ.

Its function is as follows. Cell division inhibitor that blocks the formation of polar Z ring septums. Rapidly oscillates between the poles of the cell to destabilize FtsZ filaments that have formed before they mature into polar Z rings. Prevents FtsZ polymerization. In Bacillus anthracis (strain A0248), this protein is Probable septum site-determining protein MinC.